Reading from the N-terminus, the 297-residue chain is MEEIQVTFLNMLKVERNFSAHTLKSYHDDLVQFNHFLEQELINLRTFEYKDARNYLSYLYSQNLKRTTVSRKISTLRTFYEFWMTQDETIINPFVQLVHPKKENYLPQFFYEEEMEALFETVAKDTKKGLRDRVILELLYATGIRVSELVNIQLKDIDMSLPGVKVLGKGNKERFVPFGEFCRQSIEQYLREFKPIQHTKHSFLLVNMNGAPITERGVRYVLNDVVKRTAGVTEIHPHKLRHTFATHLLNQGADLRTVQSLLGHVNLSTTGRYTHVSNQQLRKVYLNAHPRAKKESK.

The region spanning 1 to 84 (MEEIQVTFLN…TLRTFYEFWM (84 aa)) is the Core-binding (CB) domain. The region spanning 105-286 (YLPQFFYEEE…SNQQLRKVYL (182 aa)) is the Tyr recombinase domain. Residues arginine 145, lysine 169, histidine 238, arginine 241, and histidine 264 contribute to the active site. Tyrosine 273 acts as the O-(3'-phospho-DNA)-tyrosine intermediate in catalysis.

The protein belongs to the 'phage' integrase family. XerC subfamily. Forms a cyclic heterotetrameric complex composed of two molecules of XerC and two molecules of XerD.

Its subcellular location is the cytoplasm. Site-specific tyrosine recombinase, which acts by catalyzing the cutting and rejoining of the recombining DNA molecules. The XerC-XerD complex is essential to convert dimers of the bacterial chromosome into monomers to permit their segregation at cell division. It also contributes to the segregational stability of plasmids. The chain is Tyrosine recombinase XerC from Staphylococcus haemolyticus (strain JCSC1435).